We begin with the raw amino-acid sequence, 331 residues long: Probable cytosolic iron-sulfur protein assembly protein Ciao1 (331 aa).

WD repeat units follow at residues 12–51, 57–96, 97–136, 142–181, 188–227, 246–285, and 297–331; these read GHKG…WTTK, GHKR…ATLE, GHEN…EFEC, AHTQ…SDWD, SHTS…NEAG, QHSR…KRDE, and AHEQ…KLQE.

This sequence belongs to the WD repeat CIA1 family.

Essential component of the cytosolic iron-sulfur (Fe/S) protein assembly machinery. Required for the maturation of extramitochondrial Fe/S proteins. This chain is Probable cytosolic iron-sulfur protein assembly protein Ciao1, found in Drosophila grimshawi (Hawaiian fruit fly).